The following is a 189-amino-acid chain: Thermostable direct hemolysin (189 aa).

The first 24 residues, 1-24 (MKYQYFAKKSFLFISMLAAFKTFA), serve as a signal peptide directing secretion. A disulfide bridge connects residues Cys175 and Cys185.

Belongs to the TDH hemolysin family. Homodimer.

Bacterial hemolysins are exotoxins that attack blood cell membranes and cause cell rupture by mechanisms not clearly defined. The chain is Thermostable direct hemolysin (tdh) from Vibrio mimicus.